Consider the following 301-residue polypeptide: tRNA dimethylallyltransferase (301 aa).

ATP is bound at residue 9-16 (GPTASGKS). Residue 11–16 (TASGKS) participates in substrate binding. Residues 34–37 (DSMQ) are interaction with substrate tRNA.

It belongs to the IPP transferase family. In terms of assembly, monomer. The cofactor is Mg(2+).

The enzyme catalyses adenosine(37) in tRNA + dimethylallyl diphosphate = N(6)-dimethylallyladenosine(37) in tRNA + diphosphate. In terms of biological role, catalyzes the transfer of a dimethylallyl group onto the adenine at position 37 in tRNAs that read codons beginning with uridine, leading to the formation of N6-(dimethylallyl)adenosine (i(6)A). The polypeptide is tRNA dimethylallyltransferase (Corynebacterium glutamicum (strain ATCC 13032 / DSM 20300 / JCM 1318 / BCRC 11384 / CCUG 27702 / LMG 3730 / NBRC 12168 / NCIMB 10025 / NRRL B-2784 / 534)).